The primary structure comprises 248 residues: Large ribosomal subunit protein uL29m (248 aa).

Disordered regions lie at residues 77–107 (VSKY…GFFG) and 223–248 (AYEP…PPSS).

It belongs to the universal ribosomal protein uL29 family. As to quaternary structure, component of the mitochondrial large ribosomal subunit. Mature mitochondrial ribosomes consist of a small (37S) and a large (54S) subunit. The 37S subunit contains at least 33 different proteins and 1 molecule of RNA (15S). The 54S subunit contains at least 45 different proteins and 1 molecule of RNA (21S).

The protein localises to the mitochondrion. The chain is Large ribosomal subunit protein uL29m (MRPL4) from Ajellomyces capsulatus (strain NAm1 / WU24) (Darling's disease fungus).